Consider the following 172-residue polypeptide: Adenine phosphoribosyltransferase (172 aa).

This sequence belongs to the purine/pyrimidine phosphoribosyltransferase family. As to quaternary structure, homodimer.

The protein resides in the cytoplasm. It carries out the reaction AMP + diphosphate = 5-phospho-alpha-D-ribose 1-diphosphate + adenine. It participates in purine metabolism; AMP biosynthesis via salvage pathway; AMP from adenine: step 1/1. Catalyzes a salvage reaction resulting in the formation of AMP, that is energically less costly than de novo synthesis. The sequence is that of Adenine phosphoribosyltransferase from Prochlorococcus marinus (strain SARG / CCMP1375 / SS120).